The primary structure comprises 841 residues: Phosphatidylglycerol lysyltransferase (841 aa).

Over 1–8 the chain is Cytoplasmic; sequence MTKELRSK. Residues 9–29 traverse the membrane as a helical segment; that stretch reads LFTILKIAFALTLFTIVAITL. Residues 30–52 lie on the Extracellular side of the membrane; sequence YKELSHINLKDAIKSFSKINRFW. A helical membrane pass occupies residues 53–73; the sequence is LVALFLSGGASIIVLSIYDVI. Residues 74-89 are Cytoplasmic-facing; that stretch reads LAKTLKLKIGLAKTIR. A helical transmembrane segment spans residues 90 to 110; it reads IGYIVNALNAVVGFGGFIGAS. Residues 111-129 are Extracellular-facing; it reads VRFLFYKNTTDDKKALFHT. The helical transmembrane segment at 130–150 threads the bilayer; it reads ISIVLISMLTGLSLLSILVVI. Topologically, residues 151–164 are cytoplasmic; that stretch reads HVFDISHIFTPYPW. Residues 165 to 185 form a helical membrane-spanning segment; sequence VKWLMYVVALFLPIFVVFTII. Residues 186 to 193 are Extracellular-facing; it reads KPVQKTHR. Residues 194 to 216 traverse the membrane as a helical segment; the sequence is LLGVYCTIVSGVEWFVAALVLYM. Residues 217–229 lie on the Cytoplasmic side of the membrane; sequence SMAIVGVQIPFAT. Residues 230–250 traverse the membrane as a helical segment; the sequence is FMGIFILAALSGLISFIPGGF. Residues 251-270 are Extracellular-facing; it reads GTFDLVVLLGLKALNVNEEA. The chain crosses the membrane as a helical span at residues 271 to 291; that stretch reads IVLGLSLYRFAYYLFPVLIAL. The Cytoplasmic segment spans residues 292–336; the sequence is ILSTFEFRSTAKRYWEDSRILVPVKDMTSLLGSYQKDIIARIPSF. A helical transmembrane segment spans residues 337 to 357; that stretch reads AIALLLLFTSLVFFLNNLTII. Topologically, residues 358–367 are extracellular; it reads YDGLYDPNHY. The helical transmembrane segment at 368 to 388 threads the bilayer; sequence IYYIIVSIHTCACLLLLLNVI. The Cytoplasmic portion of the chain corresponds to 389–392; that stretch reads GVYK. Residues 393–413 traverse the membrane as a helical segment; that stretch reads LSKRAILFSIISVLFIFIATA. The Extracellular segment spans residues 414–415; sequence YT. Residues 416-436 form a helical membrane-spanning segment; it reads YASFILLSWLTVIFILLLVFY. Over 437 to 448 the chain is Cytoplasmic; sequence RRARVIKRPFRY. Residues 449-469 form a helical membrane-spanning segment; sequence SKLLLSVITGAIILYINHLVI. Residues 470 to 489 are Extracellular-facing; the sequence is KSTFYSLEIYHIEMLTSILR. A helical transmembrane segment spans residues 490–510; the sequence is YYFWITILLVAIIVGVIVWWF. Over 511-841 the chain is Cytoplasmic; that stretch reads EYRYRSSNSR…KVMRVIRKNN (331 aa).

This sequence belongs to the LPG synthase family.

The protein localises to the cell membrane. The enzyme catalyses L-lysyl-tRNA(Lys) + a 1,2-diacyl-sn-glycero-3-phospho-(1'-sn-glycerol) = a 1,2-diacyl-sn-glycero-3-phospho-1'-(3'-O-L-lysyl)-sn-glycerol + tRNA(Lys). Functionally, catalyzes the transfer of a lysyl group from L-lysyl-tRNA(Lys) to membrane-bound phosphatidylglycerol (PG), which produces lysylphosphatidylglycerol (LPG), a major component of the bacterial membrane with a positive net charge. LPG synthesis contributes to bacterial virulence as it is involved in the resistance mechanism against cationic antimicrobial peptides (CAMP) produces by the host's immune system (defensins, cathelicidins) and by the competing microorganisms (bacteriocins). In fact, the modification of anionic phosphatidylglycerol with positively charged L-lysine results in repulsion of the peptides. This chain is Phosphatidylglycerol lysyltransferase (mprF), found in Staphylococcus xylosus.